The sequence spans 362 residues: Alanine racemase (362 aa).

Lysine 35 (proton acceptor; specific for D-alanine) is an active-site residue. Position 35 is an N6-(pyridoxal phosphate)lysine (lysine 35). Arginine 130 is a substrate binding site. Residue tyrosine 257 is the Proton acceptor; specific for L-alanine of the active site. Methionine 305 serves as a coordination point for substrate.

This sequence belongs to the alanine racemase family. It depends on pyridoxal 5'-phosphate as a cofactor.

It catalyses the reaction L-alanine = D-alanine. The protein operates within amino-acid biosynthesis; D-alanine biosynthesis; D-alanine from L-alanine: step 1/1. Catalyzes the interconversion of L-alanine and D-alanine. May also act on other amino acids. This Nitrosomonas europaea (strain ATCC 19718 / CIP 103999 / KCTC 2705 / NBRC 14298) protein is Alanine racemase (alr).